Reading from the N-terminus, the 69-residue chain is DNA gyrase inhibitor YacG (69 aa).

Zn(2+) is bound by residues C7, C10, C26, and C30.

The protein belongs to the DNA gyrase inhibitor YacG family. As to quaternary structure, interacts with GyrB. It depends on Zn(2+) as a cofactor.

In terms of biological role, inhibits all the catalytic activities of DNA gyrase by preventing its interaction with DNA. Acts by binding directly to the C-terminal domain of GyrB, which probably disrupts DNA binding by the gyrase. This chain is DNA gyrase inhibitor YacG, found in Shewanella sp. (strain ANA-3).